The following is a 387-amino-acid chain: Alkanesulfonate monooxygenase (387 aa).

The interval 365–387 (HNSGPFGETVGNDYRPSRLASQS) is disordered.

It belongs to the SsuD family.

The enzyme catalyses an alkanesulfonate + FMNH2 + O2 = an aldehyde + FMN + sulfite + H2O + 2 H(+). Functionally, catalyzes the desulfonation of aliphatic sulfonates. In Bradyrhizobium diazoefficiens (strain JCM 10833 / BCRC 13528 / IAM 13628 / NBRC 14792 / USDA 110), this protein is Alkanesulfonate monooxygenase.